A 491-amino-acid polypeptide reads, in one-letter code: MAGGRRGANRTTYCRSPLSNDTGSVGNGNHSTSSPVTGVRSRTRNGSGTGMSSPPLATQTVVPLKHCKIPELSMDKNVLFELHLFACHLIALFVHYVNIYKTVWWYPPSHPPSHTSLNFHLIDYNMLVFTVIVLARRLIAAIVKEASQSGKLSFPHSVFLVTARFAVLTLAGWSLCRSLIYLFKTYSVLSLLFLCYPFGMYIPFFRLSCDFRRAGSMSPLSGIGSKDVGAAALGRGGRDYLSVLKETWKQHTSQLYSAQPMPTHACCLSPDLIRKEVEYLKMDFNWRMKEVLVSSMLSAYYVAFVPVWFVKSTQYVDKRWSCELFILVSVSTSVILMRHLLPPRYCDLLHKAAAHLGCWQKVDPSLCSNVLQHIWTEEYMWPQGVLVKHSKNVYKAMGHYNVAVPSDVSHYRFYFFFNKPLRILNILIILEGAMIFYQLYSLMCSEKWHQTISLALILFSNYYAFFKLLRDRIVLGKAYSYSASASNQKVS.

Residues 1–56 (MAGGRRGANRTTYCRSPLSNDTGSVGNGNHSTSSPVTGVRSRTRNGSGTGMSSPPL) are disordered. Residues N9, N20, N29, and N45 are each glycosylated (N-linked (GlcNAc...) asparagine). Composition is skewed to polar residues over residues 9–36 (NRTT…SSPV) and 44–56 (RNGS…SPPL). 8 helical membrane passes run 79 to 99 (LFEL…YVNI), 115 to 135 (TSLN…IVLA), 152 to 172 (LSFP…TLAG), 185 to 205 (TYSV…IPFF), 290 to 310 (EVLV…VWFV), 322 to 342 (CELF…HLLP), 423 to 443 (ILNI…YSLM), and 449 to 469 (HQTI…FKLL).

It belongs to the TMEM39 family. As to expression, expressed in the ovary, followed by the intestine and brain.

Its subcellular location is the endoplasmic reticulum membrane. May protect the cells against DNA damage caused by exposure to the cold-warming stress and facilitates tissue damage repair during the recovery phase. The sequence is that of Transmembrane protein 39B from Danio rerio (Zebrafish).